Reading from the N-terminus, the 137-residue chain is Peptide methionine sulfoxide reductase MsrB (137 aa).

The 123-residue stretch at 9 to 131 (DAEWRAMLDD…NSASLRFDAT (123 aa)) folds into the MsrB domain. Zn(2+) contacts are provided by Cys48, Cys51, Cys97, and Cys100. Catalysis depends on Cys120, which acts as the Nucleophile.

This sequence belongs to the MsrB Met sulfoxide reductase family. Zn(2+) is required as a cofactor.

The catalysed reaction is L-methionyl-[protein] + [thioredoxin]-disulfide + H2O = L-methionyl-(R)-S-oxide-[protein] + [thioredoxin]-dithiol. This Herminiimonas arsenicoxydans protein is Peptide methionine sulfoxide reductase MsrB.